Here is a 317-residue protein sequence, read N- to C-terminus: Transaldolase (317 aa).

The Schiff-base intermediate with substrate role is filled by Lys126.

The protein belongs to the transaldolase family. Type 1 subfamily. In terms of assembly, homodimer.

The protein localises to the cytoplasm. The enzyme catalyses D-sedoheptulose 7-phosphate + D-glyceraldehyde 3-phosphate = D-erythrose 4-phosphate + beta-D-fructose 6-phosphate. It participates in carbohydrate degradation; pentose phosphate pathway; D-glyceraldehyde 3-phosphate and beta-D-fructose 6-phosphate from D-ribose 5-phosphate and D-xylulose 5-phosphate (non-oxidative stage): step 2/3. Functionally, transaldolase is important for the balance of metabolites in the pentose-phosphate pathway. This Paraburkholderia phytofirmans (strain DSM 17436 / LMG 22146 / PsJN) (Burkholderia phytofirmans) protein is Transaldolase.